Here is a 1846-residue protein sequence, read N- to C-terminus: Brefeldin A-inhibited guanine nucleotide-exchange protein 1 (1846 aa).

The DCB; DCB:DCB domain and DCB:HUS domain interaction stretch occupies residues 2 to 224 (YEGKKTKNMF…QEAKQMERER (223 aa)). S52 carries the post-translational modification Phosphoserine. 3 disordered regions span residues 217 to 248 (AKQM…HLRY), 264 to 302 (DLDP…DQAT), and 347 to 410 (VSAS…SPGA). Residues 267–277 (PQTHDVDKSLQ) show a composition bias toward basic and acidic residues. Phosphoserine occurs at positions 286, 289, 290, 394, and 407. The span at 391 to 406 (SVSSNDTQESGNSSGP) shows a compositional bias: polar residues. The segment at 554 to 574 (ADAQSVVDIYVNYDCDLNAAN) is HUS; DCB:HUS domain interaction. Residues 631–684 (PNSQTTLGQEKPSEQEISEIKHPETINRYGSLNSLESTSSSGIGSYSTQMSGTD) are disordered. The segment covering 641-655 (KPSEQEISEIKHPET) has biased composition (basic and acidic residues). Over residues 661–681 (SLNSLESTSSSGIGSYSTQMS) the composition is skewed to low complexity. An SEC7 domain is found at 688-877 (QFEVLKQQKE…SAIYNEIAGK (190 aa)). The Nuclear localization signal (NLS) signature appears at 708–712 (KKPKR). Residues S1076, S1563, and S1566 each carry the phosphoserine modification. The segment at 1571–1600 (DSAQPRSSDNRQQAPLVSVSPASEEVSKGR) is disordered. Polar residues predominate over residues 1574 to 1585 (QPRSSDNRQQAP).

As to quaternary structure, homodimer. Interacts with ARFGEF2/BIG2; both proteins are probably part of the same or very similar macromolecular complexes. Interacts with FKBP2. Interacts with MYO9B. Interacts with PRKAR1A and PRKAR2A. Interacts with PPP1CC. Interacts with NCL, FBL, NUP62 and U3 small nucleolar RNA. Interacts with DPY30. Interacts with PDE3A. Interacts with KANK1. Interacts with TBC1D22A and TBC1D22B. Post-translationally, phosphorylated. In vitro phosphorylated by PKA reducing its GEF activity and dephosphorylated by phosphatase PP1.

The protein resides in the cytoplasm. Its subcellular location is the perinuclear region. It is found in the golgi apparatus. It localises to the trans-Golgi network. The protein localises to the nucleus. The protein resides in the nucleolus. Its subcellular location is the nucleus matrix. It is found in the membrane. With respect to regulation, inhibited by brefeldin A. Promotes guanine-nucleotide exchange on ARF1 and ARF3. Promotes the activation of ARF1/ARF3 through replacement of GDP with GTP. Involved in vesicular trafficking. Required for the maintenance of Golgi structure; the function may be independent of its GEF activity. Required for the maturation of integrin beta-1 in the Golgi. Involved in the establishment and persistence of cell polarity during directed cell movement in wound healing. Proposed to act as A kinase-anchoring protein (AKAP) and may mediate crosstalk between Arf and PKA pathways. Inhibits GAP activity of MYO9B probably through competitive RhoA binding. The function in the nucleus remains to be determined. The sequence is that of Brefeldin A-inhibited guanine nucleotide-exchange protein 1 (Arfgef1) from Rattus norvegicus (Rat).